The primary structure comprises 258 residues: RBPJ-interacting and tubulin-associated protein 1 (258 aa).

Disordered regions lie at residues 28-86, 132-182, and 195-258; these read FGSP…PRKK, TPPA…APRS, and AVPS…PPWK. The segment covering 71-81 has biased composition (polar residues); the sequence is SPSSRGSTPNL. The Nuclear localization signal motif lies at 81 to 97; sequence LTPRKKNKYRLIGHTPS. The segment at 117-145 is interaction with RBPJ/RBPSUH; the sequence is RTAVEDAAKLRTLFWTPPATPRGSHSPRP. The interaction with tubulin stretch occupies residues 145 to 258; the sequence is PRETPLRAIH…CPQKPKPPWK (114 aa). 2 stretches are compositionally biased toward polar residues: residues 201–212 and 236–245; these read HPASTAPQTNGP and GSVSGPTTPQ.

This sequence belongs to the RITA family. As to quaternary structure, interacts with RBPJ/RBPSUH.

The protein resides in the cytoplasm. The protein localises to the nucleus. Its subcellular location is the cytoskeleton. It is found in the microtubule organizing center. It localises to the centrosome. Its function is as follows. Tubulin-binding protein that acts as a negative regulator of Notch signaling pathway. Shuttles between the cytoplasm and the nucleus and mediates the nuclear export of RBPJ/RBPSUH, thereby preventing the interaction between RBPJ/RBPSUH and NICD product of Notch proteins (Notch intracellular domain), leading to down-regulate Notch-mediated transcription. May play a role in neurogenesis. This Rattus norvegicus (Rat) protein is RBPJ-interacting and tubulin-associated protein 1 (Rita1).